Reading from the N-terminus, the 94-residue chain is Small ribosomal subunit protein uS19 (94 aa).

This sequence belongs to the universal ribosomal protein uS19 family.

Its function is as follows. Protein S19 forms a complex with S13 that binds strongly to the 16S ribosomal RNA. This Pelotomaculum thermopropionicum (strain DSM 13744 / JCM 10971 / SI) protein is Small ribosomal subunit protein uS19.